The following is a 301-amino-acid chain: Dihydroorotate dehydrogenase B (NAD(+)), catalytic subunit (301 aa).

FMN contacts are provided by residues Ser21 and 45 to 46; that span reads KS. Substrate-binding positions include Lys45, 69-73, and Asn125; that span reads NAVGL. Asn125 contributes to the FMN binding site. Cys128 acts as the Nucleophile in catalysis. FMN is bound by residues Lys163 and Ile187. 188-189 lines the substrate pocket; it reads NT. Residues Gly213, 239–240, and 261–262 contribute to the FMN site; these read GG and GT.

Belongs to the dihydroorotate dehydrogenase family. Type 1 subfamily. In terms of assembly, heterotetramer of 2 PyrK and 2 PyrD type B subunits. FMN is required as a cofactor.

The protein localises to the cytoplasm. The enzyme catalyses (S)-dihydroorotate + NAD(+) = orotate + NADH + H(+). It functions in the pathway pyrimidine metabolism; UMP biosynthesis via de novo pathway; orotate from (S)-dihydroorotate (NAD(+) route): step 1/1. Its function is as follows. Catalyzes the conversion of dihydroorotate to orotate with NAD(+) as electron acceptor. The protein is Dihydroorotate dehydrogenase B (NAD(+)), catalytic subunit (pyrD) of Thermoplasma volcanium (strain ATCC 51530 / DSM 4299 / JCM 9571 / NBRC 15438 / GSS1).